Reading from the N-terminus, the 575-residue chain is V-type ATP synthase alpha chain (575 aa).

238 to 245 (GPFGAGKT) is a binding site for ATP.

Belongs to the ATPase alpha/beta chains family.

It catalyses the reaction ATP + H2O + 4 H(+)(in) = ADP + phosphate + 5 H(+)(out). Functionally, produces ATP from ADP in the presence of a proton gradient across the membrane. The V-type alpha chain is a catalytic subunit. The chain is V-type ATP synthase alpha chain from Borreliella afzelii (strain PKo) (Borrelia afzelii).